The chain runs to 268 residues: Thiazole synthase (268 aa).

The active-site Schiff-base intermediate with DXP is lysine 108. 1-deoxy-D-xylulose 5-phosphate is bound by residues glycine 169, 195-196 (AG), and 217-218 (NS). Residues 248–268 (RLKENPLASPSSPLEGVISNN) form a disordered region. A compositionally biased stretch (polar residues) spans 255–268 (ASPSSPLEGVISNN).

It belongs to the ThiG family. Homotetramer. Forms heterodimers with either ThiH or ThiS.

It is found in the cytoplasm. The enzyme catalyses [ThiS sulfur-carrier protein]-C-terminal-Gly-aminoethanethioate + 2-iminoacetate + 1-deoxy-D-xylulose 5-phosphate = [ThiS sulfur-carrier protein]-C-terminal Gly-Gly + 2-[(2R,5Z)-2-carboxy-4-methylthiazol-5(2H)-ylidene]ethyl phosphate + 2 H2O + H(+). Its pathway is cofactor biosynthesis; thiamine diphosphate biosynthesis. Functionally, catalyzes the rearrangement of 1-deoxy-D-xylulose 5-phosphate (DXP) to produce the thiazole phosphate moiety of thiamine. Sulfur is provided by the thiocarboxylate moiety of the carrier protein ThiS. In vitro, sulfur can be provided by H(2)S. The chain is Thiazole synthase from Prochlorococcus marinus (strain NATL1A).